Here is a 259-residue protein sequence, read N- to C-terminus: Dihydroorotate dehydrogenase B (NAD(+)), electron transfer subunit (259 aa).

Residues 2–102 (MQKQNMIVVN…LGPLGHGFPV (101 aa)) enclose the FAD-binding FR-type domain. Residues 53–56 (RPIS), 70–72 (LYR), and 77–78 (GT) contribute to the FAD site. 4 residues coordinate [2Fe-2S] cluster: Cys-221, Cys-226, Cys-229, and Cys-246.

This sequence belongs to the PyrK family. Heterotetramer of 2 PyrK and 2 PyrD type B subunits. It depends on [2Fe-2S] cluster as a cofactor. FAD is required as a cofactor.

Its pathway is pyrimidine metabolism; UMP biosynthesis via de novo pathway; orotate from (S)-dihydroorotate (NAD(+) route): step 1/1. Its function is as follows. Responsible for channeling the electrons from the oxidation of dihydroorotate from the FMN redox center in the PyrD type B subunit to the ultimate electron acceptor NAD(+). The sequence is that of Dihydroorotate dehydrogenase B (NAD(+)), electron transfer subunit from Bacillus cereus (strain Q1).